The chain runs to 363 residues: Peptide chain release factor 2 (363 aa).

At Q251 the chain carries N5-methylglutamine.

Belongs to the prokaryotic/mitochondrial release factor family. In terms of processing, methylated by PrmC. Methylation increases the termination efficiency of RF2.

It localises to the cytoplasm. Functionally, peptide chain release factor 2 directs the termination of translation in response to the peptide chain termination codons UGA and UAA. The protein is Peptide chain release factor 2 of Helicobacter pylori (strain P12).